We begin with the raw amino-acid sequence, 106 residues long: ATP-dependent Clp protease adapter protein ClpS (106 aa).

Residues 1 to 22 (MNEYHNSLKSKESVKDERQQKL) form a disordered region. Over residues 9-20 (KSKESVKDERQQ) the composition is skewed to basic and acidic residues.

This sequence belongs to the ClpS family. As to quaternary structure, binds to the N-terminal domain of the chaperone ClpA.

In terms of biological role, involved in the modulation of the specificity of the ClpAP-mediated ATP-dependent protein degradation. This chain is ATP-dependent Clp protease adapter protein ClpS, found in Photorhabdus laumondii subsp. laumondii (strain DSM 15139 / CIP 105565 / TT01) (Photorhabdus luminescens subsp. laumondii).